Here is a 290-residue protein sequence, read N- to C-terminus: RWD domain-containing protein 2B (290 aa).

The RWD domain maps to 12–136 (SELDLLASMF…EWVKEHAFDY (125 aa)).

The sequence is that of RWD domain-containing protein 2B (Rwdd2b) from Mus musculus (Mouse).